The chain runs to 106 residues: Ig kappa chain C region, A allele (106 aa).

The Ig-like domain occupies 5–102; the sequence is PTVSIFPPSM…SSSPVVKSFN (98 aa). An intrachain disulfide couples cysteine 26 to cysteine 86.

The protein is Ig kappa chain C region, A allele of Rattus norvegicus (Rat).